The primary structure comprises 482 residues: Vanillin dehydrogenase (482 aa).

228 to 233 (GSTHVG) contributes to the NAD(+) binding site. Catalysis depends on residues E250 and C284.

It belongs to the aldehyde dehydrogenase family.

The enzyme catalyses vanillin + NAD(+) + H2O = vanillate + NADH + 2 H(+). Catalyzes the NAD-dependent oxidation of vanillin to vanillic acid. This Pseudomonas fluorescens protein is Vanillin dehydrogenase (vdh).